A 376-amino-acid polypeptide reads, in one-letter code: Alpha-2,8-sialyltransferase 8E (376 aa).

Residues 1–17 lie on the Cytoplasmic side of the membrane; the sequence is MRYADPSANRDLLGNRT. The helical; Signal-anchor for type II membrane protein transmembrane segment at 18–38 threads the bilayer; the sequence is LLFIFICAFALVTLLQQILYG. At 39–376 the chain is on the lumenal side; it reads RNYIKRYFEF…RVHTGTCSCC (338 aa). N-linked (GlcNAc...) asparagine glycans are attached at residues N56 and N96. Disulfide bonds link C164–C313 and C178–C373. Residues N192 and 214-216 contribute to the substrate site; that span reads NPS. Residues N241 and N284 are each glycosylated (N-linked (GlcNAc...) asparagine). 300-302 is a substrate binding site; it reads STG. H348 serves as the catalytic Proton donor/acceptor.

The protein belongs to the glycosyltransferase 29 family.

The protein resides in the golgi apparatus membrane. It carries out the reaction a ganglioside GQ1c (d18:1(4E)) + CMP-N-acetyl-beta-neuraminate = a ganglioside GP1c (d18:1(4E)) + CMP + H(+). It participates in protein modification; protein glycosylation. Functionally, involved in the synthesis of gangliosides GD1c, GT1a, GQ1b, GP1c and GT3 from GD1a, GT1b, GM1b and GD3 respectively. This chain is Alpha-2,8-sialyltransferase 8E (ST8SIA5), found in Pan troglodytes (Chimpanzee).